The primary structure comprises 208 residues: MLKVIDHPLIKQKLSVIRSQKAGHDVFRKNVIEIASLMTYEVFRNYKLKEIKIDTPVAQDVLAYDYDKEIVIVAILRAGLAMVPGIVNLLPKARVGHIGIFRDEKTFEPNNYFYKIPDVPKDSEILIVDPMLATGNSAVYAIERLKKDGFKNIRLLSLVGVQEGVDNIEKNVGKDFPIFLGSLDEKLNDKKYIVPGLGDAGDRIFGTK.

5-phospho-alpha-D-ribose 1-diphosphate-binding positions include Arg77, Arg102, and 129 to 137 (DPMLATGNS). Residues Ile193 and 198-200 (GDA) contribute to the uracil site. Asp199 provides a ligand contact to 5-phospho-alpha-D-ribose 1-diphosphate.

This sequence belongs to the UPRTase family. It depends on Mg(2+) as a cofactor.

The catalysed reaction is UMP + diphosphate = 5-phospho-alpha-D-ribose 1-diphosphate + uracil. The protein operates within pyrimidine metabolism; UMP biosynthesis via salvage pathway; UMP from uracil: step 1/1. Allosterically activated by GTP. In terms of biological role, catalyzes the conversion of uracil and 5-phospho-alpha-D-ribose 1-diphosphate (PRPP) to UMP and diphosphate. In Mycoplasmopsis pulmonis (strain UAB CTIP) (Mycoplasma pulmonis), this protein is Uracil phosphoribosyltransferase.